Consider the following 156-residue polypeptide: Transcription elongation factor GreA (156 aa).

The stretch at 1 to 32 (MKKVRLTREGYEKLKKELEDLKRKFMYEISER) forms a coiled coil.

This sequence belongs to the GreA/GreB family.

Its function is as follows. Necessary for efficient RNA polymerase transcription elongation past template-encoded arresting sites. The arresting sites in DNA have the property of trapping a certain fraction of elongating RNA polymerases that pass through, resulting in locked ternary complexes. Cleavage of the nascent transcript by cleavage factors such as GreA or GreB allows the resumption of elongation from the new 3'terminus. GreA releases sequences of 2 to 3 nucleotides. This Thermotoga sp. (strain RQ2) protein is Transcription elongation factor GreA.